A 3722-amino-acid polypeptide reads, in one-letter code: Vitelline envelope sperm lysin receptor (3722 aa).

The first 24 residues, 1 to 24 (MSGMQWSFGFSCLFFLKTVWICQA), serve as a signal peptide directing secretion. At 25 to 3698 (FDADTPDPRV…TPSTDMATVQ (3674 aa)) the chain is on the extracellular side. 2 disulfide bridges follow: cysteine 43-cysteine 141 and cysteine 72-cysteine 104. The VERL 1 repeat unit spans residues 77 to 155 (MQMTRGRGIN…SQASNAPEPK (79 aa)). N-linked (GlcNAc...) asparagine glycans are attached at residues asparagine 115, asparagine 122, and asparagine 142. The tract at residues 146-169 (SQASNAPEPKASPTSSTPQPEAAS) is disordered. Residues 157-169 (SPTSSTPQPEAAS) show a composition bias toward polar residues. Asparagine 171 carries an N-linked (GlcNAc...) asparagine glycan. 2 disulfide bridges follow: cysteine 182-cysteine 280 and cysteine 211-cysteine 243. A VERL 2 repeat occupies 216-293 (VPITHEHGFN…KSPDAPKPES (78 aa)). The N-linked (GlcNAc...) asparagine glycan is linked to asparagine 254. Residues 279-335 (QCYMPKSPDAPKPESCLSSPPEPEASPSSNAPEPETYPTSSAPEKVSSDQPAPSHNQ) are disordered. Low complexity predominate over residues 291–312 (PESCLSSPPEPEASPSSNAPEP). A compositionally biased stretch (polar residues) spans 315–335 (YPTSSAPEKVSSDQPAPSHNQ). 2 N-linked (GlcNAc...) asparagine glycosylation sites follow: asparagine 334 and asparagine 373. Cystine bridges form between cysteine 345-cysteine 443 and cysteine 374-cysteine 406. The VERL 3 repeat unit spans residues 379-455 (VPITQEFGIN…PKSPVAPKPE (77 aa)). N-linked (GlcNAc...) asparagine glycosylation is found at asparagine 417, asparagine 438, asparagine 487, asparagine 501, asparagine 526, asparagine 570, asparagine 591, asparagine 640, asparagine 654, asparagine 679, asparagine 723, asparagine 744, asparagine 793, asparagine 807, asparagine 832, asparagine 876, asparagine 897, asparagine 946, asparagine 960, asparagine 985, asparagine 1029, asparagine 1050, asparagine 1099, asparagine 1113, asparagine 1138, asparagine 1182, asparagine 1203, asparagine 1252, asparagine 1266, asparagine 1291, asparagine 1335, asparagine 1356, asparagine 1405, asparagine 1419, asparagine 1443, and asparagine 1487. A disordered region spans residues 443-488 (CYMPKSPVAPKPETGPTSNAPEPETYPTSSAPEKVSSDQPAPSHNQ). A compositionally biased stretch (polar residues) spans 457–488 (GPTSNAPEPETYPTSSAPEKVSSDQPAPSHNQ). One copy of the VERL 4 repeat lies at 532–608 (VPITQEFGIN…PKSPVAPKPE (77 aa)). The disordered stretch occupies residues 603–641 (VAPKPETGPTSNAPEPETYPTSSAPEKVSSDQPAPSHNQ). Positions 610–641 (GPTSNAPEPETYPTSSAPEKVSSDQPAPSHNQ) are enriched in polar residues. A VERL 5 repeat occupies 685–761 (VPITQEFGIN…PKSPVAPKPE (77 aa)). Residues 756–794 (VAPKPETGPSSNAPEPETYPTSSAPEKVSSDQPAPSHNQ) form a disordered region. Positions 763–794 (GPSSNAPEPETYPTSSAPEKVSSDQPAPSHNQ) are enriched in polar residues. The stretch at 838-914 (VPITQEFGIN…PKSPVAPKPE (77 aa)) is one VERL 6 repeat. Positions 909 to 947 (VAPKPETGPTSNAPEPETYPTSSAPEKVSSDQPAPSHNQ) are disordered. Positions 916–947 (GPTSNAPEPETYPTSSAPEKVSSDQPAPSHNQ) are enriched in polar residues. One copy of the VERL 7 repeat lies at 991–1067 (VPITHEFGIN…PKSPVAPKPE (77 aa)). Residues 1062–1100 (VAPKPETGPTSNAPEPETYPTSSAPEKVSSDQPAPSHNQ) are disordered. A compositionally biased stretch (polar residues) spans 1069-1100 (GPTSNAPEPETYPTSSAPEKVSSDQPAPSHNQ). The stretch at 1144 to 1220 (VPITQEFGIN…PKSPVAPKPE (77 aa)) is one VERL 8 repeat. Residues 1215-1253 (VAPKPETGPTSNAPEPETYPTSSAPEKVSSDQPAPSHNQ) form a disordered region. The span at 1222-1253 (GPTSNAPEPETYPTSSAPEKVSSDQPAPSHNQ) shows a compositional bias: polar residues. Residues 1297-1373 (VPITHKFGIN…PKSPVAHKPE (77 aa)) form a VERL 9 repeat. A disordered region spans residues 1368–1406 (VAHKPETGPTSNAPEPETYPTSSAPEKVSSDQPAPSHNQ). Over residues 1375 to 1406 (GPTSNAPEPETYPTSSAPEKVSSDQPAPSHNQ) the composition is skewed to polar residues. A VERL 10 repeat occupies 1449 to 1525 (VPITHEFGIN…PKSPVAPKPE (77 aa)). The disordered stretch occupies residues 1519–1556 (PVAPKPETGPSSNAPEPETYPTSSAPEKVYSDQPAPSH). Residues 1527-1543 (GPSSNAPEPETYPTSSA) are compositionally biased toward polar residues. Residues asparagine 1557, asparagine 1571, asparagine 1596, asparagine 1640, asparagine 1661, asparagine 1710, asparagine 1724, asparagine 1749, asparagine 1793, asparagine 1814, asparagine 1863, asparagine 1877, asparagine 1902, asparagine 1946, asparagine 1967, asparagine 2016, asparagine 2030, asparagine 2055, asparagine 2099, asparagine 2120, asparagine 2169, asparagine 2183, asparagine 2208, asparagine 2252, asparagine 2273, asparagine 2322, asparagine 2336, asparagine 2361, asparagine 2405, asparagine 2426, asparagine 2475, asparagine 2489, asparagine 2514, asparagine 2558, asparagine 2579, asparagine 2628, asparagine 2642, asparagine 2667, asparagine 2711, asparagine 2732, asparagine 2781, asparagine 2795, asparagine 2820, asparagine 2864, asparagine 2885, asparagine 2934, asparagine 2948, asparagine 2973, asparagine 3017, asparagine 3038, asparagine 3087, asparagine 3101, asparagine 3126, asparagine 3170, asparagine 3191, asparagine 3229, asparagine 3243, asparagine 3268, asparagine 3312, and asparagine 3333 are each glycosylated (N-linked (GlcNAc...) asparagine). One copy of the VERL 11 repeat lies at 1602 to 1678 (VPITHEFGIN…PKSPVAPKPE (77 aa)). The disordered stretch occupies residues 1672-1711 (PVAPKPETGPTSNAPEPQTYPTSSAPEKVSSDQPAPSHNQ). Over residues 1680-1711 (GPTSNAPEPQTYPTSSAPEKVSSDQPAPSHNQ) the composition is skewed to polar residues. Residues 1755–1831 (VPITQEFGIN…PKSPVAPKPE (77 aa)) form a VERL 12 repeat. The tract at residues 1826 to 1864 (VAPKPETGPTSNAPEPETYPTSSAPEKVSSDQPAPSHNQ) is disordered. Residues 1833-1864 (GPTSNAPEPETYPTSSAPEKVSSDQPAPSHNQ) are compositionally biased toward polar residues. One copy of the VERL 13 repeat lies at 1908 to 1984 (VPITHEFGIN…PKSPVAPKPE (77 aa)). Residues 1979–2017 (VAPKPETGPTSNAPEPETYPTSSAPEKVSSDQPAPSHNQ) are disordered. The segment covering 1986–2017 (GPTSNAPEPETYPTSSAPEKVSSDQPAPSHNQ) has biased composition (polar residues). The VERL 14 repeat unit spans residues 2061-2137 (VPITQEFGIN…PKSPVAPKPE (77 aa)). Residues 2132–2170 (VAPKPETGPTSNAPEPETYPTSSAPEKVSSDQPAPSHNQ) form a disordered region. A compositionally biased stretch (polar residues) spans 2139–2170 (GPTSNAPEPETYPTSSAPEKVSSDQPAPSHNQ). A VERL 15 repeat occupies 2214–2290 (VPITQEFGIN…PKSPVAPKPE (77 aa)). Positions 2285-2323 (VAPKPETGPTSNAPEPETYPTSSAPEKVSSDQPAPSHNQ) are disordered. A compositionally biased stretch (polar residues) spans 2292 to 2323 (GPTSNAPEPETYPTSSAPEKVSSDQPAPSHNQ). Residues 2367-2443 (VPITQEFGIN…PKSPVAPKPE (77 aa)) form a VERL 16 repeat. Residues 2438-2476 (VAPKPETGPTSNAPEPETYPTSSAPEKVSSDQPAPSHNQ) are disordered. Residues 2445–2476 (GPTSNAPEPETYPTSSAPEKVSSDQPAPSHNQ) are compositionally biased toward polar residues. A VERL 17 repeat occupies 2520-2596 (VPITQEFGIN…PKSPVAPKPE (77 aa)). The disordered stretch occupies residues 2590-2629 (PVAPKPETGPTSNAPEPQTYPTSSAPEKVSSDQPAPSHNQ). Over residues 2598–2629 (GPTSNAPEPQTYPTSSAPEKVSSDQPAPSHNQ) the composition is skewed to polar residues. One copy of the VERL 18 repeat lies at 2673–2749 (VPITQEFGIN…PKSPVAPKPE (77 aa)). The disordered stretch occupies residues 2744-2782 (VAPKPETGPTSNAPEPETYPTSSAPEKVSSDQPAPSHNQ). A compositionally biased stretch (polar residues) spans 2751–2782 (GPTSNAPEPETYPTSSAPEKVSSDQPAPSHNQ). One copy of the VERL 19 repeat lies at 2826–2902 (VPITHEFGIN…PKSPVAPKPE (77 aa)). Positions 2897-2935 (VAPKPETGPTSNAPEPQTYPTSSAPEKVSSDQPAPSHNQ) are disordered. A compositionally biased stretch (polar residues) spans 2904–2935 (GPTSNAPEPQTYPTSSAPEKVSSDQPAPSHNQ). Residues 2979–3055 (VPITQEFGIN…PKSPVAPKPE (77 aa)) form a VERL 20 repeat. Residues 3050–3088 (VAPKPETGPTSNAPEPETYPTSSAPEKVSSDQPAPSHNQ) are disordered. Residues 3057–3088 (GPTSNAPEPETYPTSSAPEKVSSDQPAPSHNQ) are compositionally biased toward polar residues. Residues 3132-3208 (VPITQEFGIN…PKSPVAPKPE (77 aa)) form a VERL 21 repeat. The segment at 3205-3230 (PKPETYPTSSAPEKVSSDQPAPSHNQ) is disordered. Polar residues predominate over residues 3210 to 3230 (YPTSSAPEKVSSDQPAPSHNQ). A VERL 22 repeat occupies 3274–3351 (VPITHEFGIN…KSPVAPKPEA (78 aa)). The disordered stretch occupies residues 3345-3407 (VAPKPEASPT…RKSNQTTSTE (63 aa)). Over residues 3352–3375 (SPTSNAPEPQTYPTSSAPGTSPEG) the composition is skewed to polar residues. Residues asparagine 3388, asparagine 3401, asparagine 3449, asparagine 3456, asparagine 3559, and asparagine 3650 are each glycosylated (N-linked (GlcNAc...) asparagine). The 263-residue stretch at 3408–3670 (DVLDDTSNYI…SSCSNQRRTR (263 aa)) folds into the ZP domain. A helical transmembrane segment spans residues 3699–3719 (VALLVAVALLITQLAGLAIYV). Residues 3720 to 3722 (NIN) lie on the Cytoplasmic side of the membrane.

As to quaternary structure, may form disulfide-linked homodimers. Interacts (via VERL repeats) with sperm lysin. Each VERL chain can bind numerous lysin molecules. Post-translationally, N-glycosylated. About half of the glycoprotein mass corresponds to carbohydrate chains. N-glycosylation is not required for lysin binding. In terms of processing, O-glycosylated. O-glycosylation is not required for lysin binding.

It is found in the cell membrane. The protein localises to the secreted. Its subcellular location is the extracellular space. It localises to the extracellular matrix. Functionally, structural component of the egg vitelline envelope; forms long filaments. Functions as a species-specific receptor for the sperm protein lysin; prevents fertilization by sperm from other species. Each VERL chain can bind multiple copies of the sperm protein lysin; this creates a 3 um hole in the egg vitelline envelope through which the sperm passes. The sequence is that of Vitelline envelope sperm lysin receptor from Haliotis rufescens (California red abalone).